The chain runs to 264 residues: Thiazole synthase (264 aa).

Catalysis depends on K106, which acts as the Schiff-base intermediate with DXP. Residues G167, 193-194 (AG), and 215-216 (NT) contribute to the 1-deoxy-D-xylulose 5-phosphate site.

It belongs to the ThiG family. As to quaternary structure, homotetramer. Forms heterodimers with either ThiH or ThiS.

The protein resides in the cytoplasm. The catalysed reaction is [ThiS sulfur-carrier protein]-C-terminal-Gly-aminoethanethioate + 2-iminoacetate + 1-deoxy-D-xylulose 5-phosphate = [ThiS sulfur-carrier protein]-C-terminal Gly-Gly + 2-[(2R,5Z)-2-carboxy-4-methylthiazol-5(2H)-ylidene]ethyl phosphate + 2 H2O + H(+). Its pathway is cofactor biosynthesis; thiamine diphosphate biosynthesis. Its function is as follows. Catalyzes the rearrangement of 1-deoxy-D-xylulose 5-phosphate (DXP) to produce the thiazole phosphate moiety of thiamine. Sulfur is provided by the thiocarboxylate moiety of the carrier protein ThiS. In vitro, sulfur can be provided by H(2)S. This Xanthomonas axonopodis pv. citri (strain 306) protein is Thiazole synthase.